Here is a 671-residue protein sequence, read N- to C-terminus: UvrABC system protein B (671 aa).

Residues 26 to 414 (EGLENGLAHQ…GGDIIEQVVR (389 aa)) form the Helicase ATP-binding domain. 39–46 (GVTGSGKT) lines the ATP pocket. The short motif at 92–115 (YYDYYQPEAYVPSSDTFIEKDASV) is the Beta-hairpin element. Positions 431–593 (QVDDLLSEIR…IIPQGLNKKI (163 aa)) constitute a Helicase C-terminal domain. Residues 631–666 (DQKIRELEAKMYTYAQNLEFEQAAELRDQVHQLRQQ) enclose the UVR domain.

It belongs to the UvrB family. Forms a heterotetramer with UvrA during the search for lesions. Interacts with UvrC in an incision complex.

It localises to the cytoplasm. The UvrABC repair system catalyzes the recognition and processing of DNA lesions. A damage recognition complex composed of 2 UvrA and 2 UvrB subunits scans DNA for abnormalities. Upon binding of the UvrA(2)B(2) complex to a putative damaged site, the DNA wraps around one UvrB monomer. DNA wrap is dependent on ATP binding by UvrB and probably causes local melting of the DNA helix, facilitating insertion of UvrB beta-hairpin between the DNA strands. Then UvrB probes one DNA strand for the presence of a lesion. If a lesion is found the UvrA subunits dissociate and the UvrB-DNA preincision complex is formed. This complex is subsequently bound by UvrC and the second UvrB is released. If no lesion is found, the DNA wraps around the other UvrB subunit that will check the other stand for damage. This chain is UvrABC system protein B, found in Yersinia pestis.